The primary structure comprises 529 residues: BAR/IMD domain-containing adapter protein 2-like 2 (529 aa).

The IMD domain occupies 1 to 239 (MAPEMDQFYR…HSPGLLGPVL (239 aa)). Disordered regions lie at residues 221–332 (EASR…GGAR) and 399–529 (NPLN…PLIR). 3 positions are modified to phosphoserine: S231, S272, and S304. The span at 301 to 317 (SASSLYSSSTQRSRSNS) shows a compositional bias: low complexity. A compositionally biased stretch (gly residues) spans 321 to 331 (RPGGGGGGGGA). The SH3 domain occupies 329-392 (GGARRVRALV…PEAYVKPLDE (64 aa)). The segment covering 439–459 (GNSTASSDYWDGQSRSRTPSH) has biased composition (polar residues). Positions 473 to 484 (PSSRRSSMGSMG) are enriched in low complexity. Phosphoserine occurs at positions 479 and 482.

The protein resides in the cell membrane. It is found in the cell junction. Its subcellular location is the cytoplasmic vesicle membrane. Phosphoinositides-binding protein that induces the formation of planar or gently curved membrane structures. Binds to phosphoinositides, including to phosphatidylinositol 4,5-bisphosphate (PtdIns(4,5)P2) headgroups. There seems to be no clear preference for a specific phosphoinositide. In Bos taurus (Bovine), this protein is BAR/IMD domain-containing adapter protein 2-like 2 (BAIAP2L2).